A 169-amino-acid polypeptide reads, in one-letter code: Ribosomal RNA large subunit methyltransferase H (169 aa).

Residues L85, G117, and 136–141 each bind S-adenosyl-L-methionine; that span reads LGELTW.

Belongs to the RNA methyltransferase RlmH family. As to quaternary structure, homodimer.

It localises to the cytoplasm. The catalysed reaction is pseudouridine(1915) in 23S rRNA + S-adenosyl-L-methionine = N(3)-methylpseudouridine(1915) in 23S rRNA + S-adenosyl-L-homocysteine + H(+). In terms of biological role, specifically methylates the pseudouridine at position 1915 (m3Psi1915) in 23S rRNA. This is Ribosomal RNA large subunit methyltransferase H from Brucella ovis (strain ATCC 25840 / 63/290 / NCTC 10512).